A 174-amino-acid chain; its full sequence is NADH-quinone oxidoreductase subunit C (174 aa).

Belongs to the complex I 30 kDa subunit family. In terms of assembly, NDH-1 is composed of 14 different subunits. Subunits NuoB, C, D, E, F, and G constitute the peripheral sector of the complex.

The protein localises to the cell membrane. The enzyme catalyses a quinone + NADH + 5 H(+)(in) = a quinol + NAD(+) + 4 H(+)(out). Functionally, NDH-1 shuttles electrons from NADH, via FMN and iron-sulfur (Fe-S) centers, to quinones in the respiratory chain. The immediate electron acceptor for the enzyme in this species is believed to be ubiquinone. Couples the redox reaction to proton translocation (for every two electrons transferred, four hydrogen ions are translocated across the cytoplasmic membrane), and thus conserves the redox energy in a proton gradient. The protein is NADH-quinone oxidoreductase subunit C of Roseiflexus sp. (strain RS-1).